The chain runs to 156 residues: METVNEPETGEVSKDAVIVKQEKNNEYCLQDIDDKLSESAEDDGEDDTNDEDDDEDSNPKKNTQAPLELMAEFLRAEMAREYQLAKKLCQMILIYEPENPEAKEFFTLIEEMLLMEKTQNHEQDGENSDEDSSGESKGESDEELSDESSDEGEDGS.

2 disordered regions span residues leucine 29–proline 66 and glutamate 116–serine 156. Acidic residues-rich tracts occupy residues serine 39–aspartate 56 and serine 140–serine 156.

The polypeptide is Glutamate-rich protein 2 (ERICH2) (Homo sapiens (Human)).